The following is a 452-amino-acid chain: Biotin carboxylase (452 aa).

In terms of domain architecture, Biotin carboxylation spans 1–445 (MFKKVLIANR…TTAFVTNHLK (445 aa)). Residues lysine 116, lysine 158, 164–165 (GG), 200–203 (EKAV), histidine 208, and histidine 235 contribute to the ATP site. Residues 120–317 (RTAMQTAGVP…LVEWQLLIAA (198 aa)) form the ATP-grasp domain. A hydrogencarbonate-binding site is contributed by lysine 237. The ATP site is built by glutamate 275 and glutamate 288. Glutamate 275, glutamate 288, and asparagine 290 together coordinate Mg(2+). Residues glutamate 275, glutamate 288, and asparagine 290 each contribute to the Mn(2+) site. Hydrogencarbonate is bound by residues arginine 292, valine 295, and arginine 338. Arginine 292 is an active-site residue. A biotin-binding site is contributed by arginine 338.

In terms of assembly, acetyl-CoA carboxylase is a heterohexamer of biotin carboxyl carrier protein, biotin carboxylase and the two subunits of carboxyl transferase in a 2:2 complex. It depends on Mg(2+) as a cofactor. The cofactor is Mn(2+).

The enzyme catalyses N(6)-biotinyl-L-lysyl-[protein] + hydrogencarbonate + ATP = N(6)-carboxybiotinyl-L-lysyl-[protein] + ADP + phosphate + H(+). It participates in lipid metabolism; malonyl-CoA biosynthesis; malonyl-CoA from acetyl-CoA: step 1/1. Functionally, this protein is a component of the acetyl coenzyme A carboxylase complex; first, biotin carboxylase catalyzes the carboxylation of the carrier protein and then the transcarboxylase transfers the carboxyl group to form malonyl-CoA. In Halalkalibacterium halodurans (strain ATCC BAA-125 / DSM 18197 / FERM 7344 / JCM 9153 / C-125) (Bacillus halodurans), this protein is Biotin carboxylase (accC).